Here is a 98-residue protein sequence, read N- to C-terminus: Ferredoxin-like protein (98 aa).

This sequence to ferredoxins from P.putida and C.tartarivorum, ferredoxin I from A.vinelandii, ferredoxin II from D.desulfuricans.

Could be a 3Fe-4S cluster-containing protein. The polypeptide is Ferredoxin-like protein (fixX) (Rhizobium leguminosarum).